A 341-amino-acid polypeptide reads, in one-letter code: Serine/threonine-protein kinase pdik1l (341 aa).

A Protein kinase domain is found at 8-332 (YELIQEVGRG…FELELRLVRI (325 aa)). Residue 14–22 (VGRGSYGVV) participates in ATP binding. The active-site Proton acceptor is Asp-164.

It belongs to the protein kinase superfamily. Ser/Thr protein kinase family.

The protein resides in the nucleus. The enzyme catalyses L-seryl-[protein] + ATP = O-phospho-L-seryl-[protein] + ADP + H(+). It catalyses the reaction L-threonyl-[protein] + ATP = O-phospho-L-threonyl-[protein] + ADP + H(+). This Danio rerio (Zebrafish) protein is Serine/threonine-protein kinase pdik1l (pdik1l).